We begin with the raw amino-acid sequence, 162 residues long: Crossover junction endodeoxyribonuclease RuvC (162 aa).

Active-site residues include Asp-7, Glu-67, and Asp-140. Asp-7, Glu-67, and Asp-140 together coordinate Mg(2+).

It belongs to the RuvC family. As to quaternary structure, homodimer which binds Holliday junction (HJ) DNA. The HJ becomes 2-fold symmetrical on binding to RuvC with unstacked arms; it has a different conformation from HJ DNA in complex with RuvA. In the full resolvosome a probable DNA-RuvA(4)-RuvB(12)-RuvC(2) complex forms which resolves the HJ. Mg(2+) serves as cofactor.

It is found in the cytoplasm. The enzyme catalyses Endonucleolytic cleavage at a junction such as a reciprocal single-stranded crossover between two homologous DNA duplexes (Holliday junction).. Its function is as follows. The RuvA-RuvB-RuvC complex processes Holliday junction (HJ) DNA during genetic recombination and DNA repair. Endonuclease that resolves HJ intermediates. Cleaves cruciform DNA by making single-stranded nicks across the HJ at symmetrical positions within the homologous arms, yielding a 5'-phosphate and a 3'-hydroxyl group; requires a central core of homology in the junction. The consensus cleavage sequence is 5'-(A/T)TT(C/G)-3'. Cleavage occurs on the 3'-side of the TT dinucleotide at the point of strand exchange. HJ branch migration catalyzed by RuvA-RuvB allows RuvC to scan DNA until it finds its consensus sequence, where it cleaves and resolves the cruciform DNA. The protein is Crossover junction endodeoxyribonuclease RuvC of Wolinella succinogenes (strain ATCC 29543 / DSM 1740 / CCUG 13145 / JCM 31913 / LMG 7466 / NCTC 11488 / FDC 602W) (Vibrio succinogenes).